Consider the following 158-residue polypeptide: Extracellular giant hemoglobin major globin subunit A2 (158 aa).

A signal peptide spans 1–16 (MKSLIVFACLVAYAAA). One can recognise a Globin domain in the interval 17–158 (DCTSLNRLLV…MNQIVSGISG (142 aa)). An intrachain disulfide couples Cys-18 to Cys-148. Cys-89 is a hydrogen sulfide binding site. His-110 is a heme b binding site.

The protein belongs to the globin family. As to quaternary structure, the 400 kDa hemoglobin consists of a spherical 24-mer arranged as a double layer of dome-shaped dodecamers. Each dodecamer is composed of the 3-fold trimer of the tetramer A1-A2-B1-B2 having one intra-tetramer (A1-B2) disulfide bond and one inter-tetramer (B1-B2) disulfide bond per tetramer.

The protein localises to the secreted. Functionally, the extracellular giant hemoglobin is able to bind and transport oxygen and hydrosulfide simultaneously and reversibly at two different sites. This chain is Extracellular giant hemoglobin major globin subunit A2 (ghbA2), found in Oligobrachia mashikoi (Beard worm).